A 358-amino-acid chain; its full sequence is MALLSSTLRAPLVFSKNPKPVSLSSLHSRIYLSPRSPRFPSLRFISAAGDTGDAEKPSSNISDEWGEGSEPETKPFTYFKLPDSDPPKDEDEWGKGAAAGAGSYNDAGNGTPTFAAEASPEAEAEDGVDENLEGLKRSLVDTVYGTELGFRARSEVRAEVSEFVAQLEAANPTPAPVEEPDLLNGNWVLLYTASSELLPLLAAGSLPLLKLDKISQTIDTDSFTVVNSTTLSSPFASFSFSVSASFEVRSPTRIQVTFKEGSLQPPEIKSKIDLPENINIFGQQLSLGPLLQSLGPLENVVANISRVISGQSPLKIPIPGERTSSWLITTYLDKDLRISRGDGGLFVLAREGSSLLDQ.

The N-terminal 47 residues, 1 to 47, are a transit peptide targeting the chloroplast; sequence MALLSSTLRAPLVFSKNPKPVSLSSLHSRIYLSPRSPRFPSLRFISA. Residues 48–114 form a disordered region; the sequence is AGDTGDAEKP…NDAGNGTPTF (67 aa).

Belongs to the PAP/fibrillin family.

The protein resides in the plastid. It localises to the chloroplast. Functionally, may form together with other plastoglobulins a coat on the surface of the lipoprotein particle. The coat may contain receptors for attachment to the thylakoid membrane as well as regulatory proteins that may function in the transfer of lipids to and from the thylakoid membranes. The polypeptide is Plastoglobulin-1, chloroplastic (PG1) (Pisum sativum (Garden pea)).